We begin with the raw amino-acid sequence, 285 residues long: Glutamate racemase (285 aa).

Substrate-binding positions include 28 to 29 (DS) and 60 to 61 (YG). Catalysis depends on Cys-92, which acts as the Proton donor/acceptor. A substrate-binding site is contributed by 93 to 94 (NT). The Proton donor/acceptor role is filled by Cys-204. 205 to 206 (TH) is a substrate binding site.

This sequence belongs to the aspartate/glutamate racemases family.

The catalysed reaction is L-glutamate = D-glutamate. It participates in cell wall biogenesis; peptidoglycan biosynthesis. Functionally, provides the (R)-glutamate required for cell wall biosynthesis. The chain is Glutamate racemase from Escherichia coli O6:H1 (strain CFT073 / ATCC 700928 / UPEC).